The chain runs to 396 residues: Acetate kinase (396 aa).

Asn7 contacts Mg(2+). Lys14 contributes to the ATP binding site. Residue Arg88 participates in substrate binding. Residue Asp145 is the Proton donor/acceptor of the active site. Residues 205–209 (HLGNG), 279–281 (DFR), and 327–331 (GIGEN) each bind ATP. Mg(2+) is bound at residue Glu381.

The protein belongs to the acetokinase family. Homodimer. Requires Mg(2+) as cofactor. The cofactor is Mn(2+).

The protein resides in the cytoplasm. The catalysed reaction is acetate + ATP = acetyl phosphate + ADP. It participates in metabolic intermediate biosynthesis; acetyl-CoA biosynthesis; acetyl-CoA from acetate: step 1/2. Catalyzes the formation of acetyl phosphate from acetate and ATP. Can also catalyze the reverse reaction. This is Acetate kinase from Campylobacter jejuni subsp. doylei (strain ATCC BAA-1458 / RM4099 / 269.97).